We begin with the raw amino-acid sequence, 333 residues long: Serine/threonine-protein phosphatase 4 catalytic subunit 1 (333 aa).

Residues 1–29 form a disordered region; it reads MALAVADTQNETFARSESPTSGPSDQLST. Residues 7 to 27 are compositionally biased toward polar residues; the sequence is DTQNETFARSESPTSGPSDQL. 4 residues coordinate Mn(2+): aspartate 79, histidine 81, aspartate 107, and asparagine 139. Histidine 140 functions as the Proton donor in the catalytic mechanism. Mn(2+) contacts are provided by histidine 189 and histidine 264. Residue leucine 333 is modified to Leucine methyl ester.

Belongs to the PPP phosphatase family. PP-4 (PP-X) subfamily. Serine/threonine-protein phosphatase 4 (PP4) occurs in different assemblies of the catalytic and one or more regulatory subunits. The regulatory subunits are likely to be ppfr-1, ppfr-2, ppfr-4 and smk-1. Interacts with mei-1. Requires Mn(2+) as cofactor. In terms of processing, methylation at the C-terminal Leu-333 is critical for interactions with regulatory subunits.

The protein resides in the cytoplasm. Its subcellular location is the cytoskeleton. The protein localises to the microtubule organizing center. It localises to the centrosome. The catalysed reaction is O-phospho-L-seryl-[protein] + H2O = L-seryl-[protein] + phosphate. It catalyses the reaction O-phospho-L-threonyl-[protein] + H2O = L-threonyl-[protein] + phosphate. Protein phosphatase which plays an essential role in meiosis and in early embryonic mitosis. During spermatocyte meiosis and the first embryonic mitosis, regulates centrosome maturation, and thus spindle formation, by recruiting some of the components of the pericentriolar material (PCM). During oocyte meiosis I, regulates meiotic chromosome dynamics including synapsis-independent chromosome pairing, restriction of synapsis to homologous chromosomes, programmed DNA double-strand break initiation and crossover formation resulting in chiasma formation. During oocyte meiosis II and probably together with regulatory subunit ppfr-1, may regulate microtubule severing by dephosphorylating and activating mei-1, a component of the katanin microtubule severing complex. The chain is Serine/threonine-protein phosphatase 4 catalytic subunit 1 (pph-4.1) from Caenorhabditis briggsae.